The following is a 68-amino-acid chain: Guanine nucleotide-binding protein G(I)/G(S)/G(O) subunit gamma-5B (68 aa).

Residues 3–68 (GFSSVAATKK…FRPQKVCSFL (66 aa)) form the G protein gamma domain. At Cys65 the chain carries Cysteine methyl ester. A lipid anchor (S-geranylgeranyl cysteine) is attached at Cys65. The propeptide at 66-68 (SFL) is removed in mature form.

Belongs to the G protein gamma family. G proteins are composed of 3 units; alpha, beta and gamma.

Its subcellular location is the cell membrane. Functionally, guanine nucleotide-binding proteins (G proteins) are involved as a modulator or transducer in various transmembrane signaling systems. The beta and gamma chains are required for the GTPase activity, for replacement of GDP by GTP, and for G protein-effector interaction. In Homo sapiens (Human), this protein is Guanine nucleotide-binding protein G(I)/G(S)/G(O) subunit gamma-5B.